A 216-amino-acid chain; its full sequence is GTP cyclohydrolase-2 (216 aa).

50-54 (RIHSE) lines the GTP pocket. The Zn(2+) site is built by cysteine 55, cysteine 66, and cysteine 68. Residues glutamine 71, 93–95 (EGR), and threonine 115 each bind GTP. The Proton acceptor role is filled by aspartate 127. Arginine 129 functions as the Nucleophile in the catalytic mechanism. GTP is bound by residues threonine 150 and lysine 155.

Belongs to the GTP cyclohydrolase II family. Zn(2+) is required as a cofactor.

It carries out the reaction GTP + 4 H2O = 2,5-diamino-6-hydroxy-4-(5-phosphoribosylamino)-pyrimidine + formate + 2 phosphate + 3 H(+). It functions in the pathway cofactor biosynthesis; riboflavin biosynthesis; 5-amino-6-(D-ribitylamino)uracil from GTP: step 1/4. Catalyzes the conversion of GTP to 2,5-diamino-6-ribosylamino-4(3H)-pyrimidinone 5'-phosphate (DARP), formate and pyrophosphate. This is GTP cyclohydrolase-2 from Histophilus somni (strain 129Pt) (Haemophilus somnus).